The following is a 286-amino-acid chain: Pyridoxal kinase PdxY (286 aa).

Substrate-binding positions include S9 and 44-45 (TQ). Residues D111, A143, E148, K181, and 208–211 (RPLV) each bind ATP. Substrate is bound at residue D223.

This sequence belongs to the pyridoxine kinase family. PdxY subfamily. As to quaternary structure, homodimer. Requires Mg(2+) as cofactor.

It catalyses the reaction pyridoxal + ATP = pyridoxal 5'-phosphate + ADP + H(+). Its pathway is cofactor metabolism; pyridoxal 5'-phosphate salvage; pyridoxal 5'-phosphate from pyridoxal: step 1/1. In terms of biological role, pyridoxal kinase involved in the salvage pathway of pyridoxal 5'-phosphate (PLP). Catalyzes the phosphorylation of pyridoxal to PLP. The sequence is that of Pyridoxal kinase PdxY from Yersinia pseudotuberculosis serotype I (strain IP32953).